Consider the following 383-residue polypeptide: Chitinase-3-like protein 1 (383 aa).

Positions 1-21 (MGLRVAQTGFVVLVLLQSCAA) are cleaved as a signal peptide. In terms of domain architecture, GH18 spans 22-383 (YKLICYYTSW…NAIKDVLAGV (362 aa)). Cys-26 and Cys-51 are disulfide-bonded. The N-linked (GlcNAc...) asparagine glycan is linked to Asn-60. Chitin is bound by residues 70–71 (EW), 97–100 (GGWN), Tyr-141, 204–207 (LTYD), and Lys-263. Residues Cys-300 and Cys-364 are joined by a disulfide bond. Residues 324-338 (QWVAYDDQESVKNKA) form an important for AKT1 activation and IL8 production region. Trp-352 is a chitin binding site.

Belongs to the glycosyl hydrolase 18 family. In terms of assembly, monomer. Detected in mammary gland.

It localises to the secreted. It is found in the extracellular space. The protein resides in the cytoplasm. The protein localises to the perinuclear region. Its subcellular location is the endoplasmic reticulum. Functionally, carbohydrate-binding lectin with a preference for chitin. Has no chitinase activity. May play a role in tissue remodeling and in the capacity of cells to respond to and cope with changes in their environment. Plays a role in T-helper cell type 2 (Th2) inflammatory response and IL-13-induced inflammation, regulating allergen sensitization, inflammatory cell apoptosis, dendritic cell accumulation and M2 macrophage differentiation. Facilitates invasion of pathogenic enteric bacteria into colonic mucosa and lymphoid organs. Mediates activation of AKT1 signaling pathway and subsequent IL8 production in colonic epithelial cells. Regulates antibacterial responses in lung by contributing to macrophage bacterial killing, controlling bacterial dissemination and augmenting host tolerance. Also regulates hyperoxia-induced injury, inflammation and epithelial apoptosis in lung. This Bubalus bubalis (Domestic water buffalo) protein is Chitinase-3-like protein 1 (CHI3L1).